We begin with the raw amino-acid sequence, 456 residues long: Methylenetetrahydrofolate--tRNA-(uracil-5-)-methyltransferase TrmFO (456 aa).

11–16 (GAGLAG) provides a ligand contact to FAD.

It belongs to the MnmG family. TrmFO subfamily. FAD is required as a cofactor.

It is found in the cytoplasm. It catalyses the reaction uridine(54) in tRNA + (6R)-5,10-methylene-5,6,7,8-tetrahydrofolate + NADH + H(+) = 5-methyluridine(54) in tRNA + (6S)-5,6,7,8-tetrahydrofolate + NAD(+). The catalysed reaction is uridine(54) in tRNA + (6R)-5,10-methylene-5,6,7,8-tetrahydrofolate + NADPH + H(+) = 5-methyluridine(54) in tRNA + (6S)-5,6,7,8-tetrahydrofolate + NADP(+). Functionally, catalyzes the folate-dependent formation of 5-methyl-uridine at position 54 (M-5-U54) in all tRNAs. The sequence is that of Methylenetetrahydrofolate--tRNA-(uracil-5-)-methyltransferase TrmFO from Synechococcus sp. (strain CC9605).